We begin with the raw amino-acid sequence, 117 residues long: Large ribosomal subunit protein bL20c (117 aa).

Belongs to the bacterial ribosomal protein bL20 family.

The protein resides in the plastid. It localises to the chloroplast. Its function is as follows. Binds directly to 23S ribosomal RNA and is necessary for the in vitro assembly process of the 50S ribosomal subunit. It is not involved in the protein synthesizing functions of that subunit. The protein is Large ribosomal subunit protein bL20c of Nasturtium officinale (Watercress).